Here is a 342-residue protein sequence, read N- to C-terminus: Phosphate acyltransferase (342 aa).

Belongs to the PlsX family. As to quaternary structure, homodimer. Probably interacts with PlsY.

It is found in the cytoplasm. It catalyses the reaction a fatty acyl-[ACP] + phosphate = an acyl phosphate + holo-[ACP]. It participates in lipid metabolism; phospholipid metabolism. In terms of biological role, catalyzes the reversible formation of acyl-phosphate (acyl-PO(4)) from acyl-[acyl-carrier-protein] (acyl-ACP). This enzyme utilizes acyl-ACP as fatty acyl donor, but not acyl-CoA. The chain is Phosphate acyltransferase from Blochmanniella pennsylvanica (strain BPEN).